A 163-amino-acid polypeptide reads, in one-letter code: Epithelial membrane protein 3 (163 aa).

The chain crosses the membrane as a helical span at residues 4–24; sequence LLLVVSALHILILVLLFVATL. N-linked (GlcNAc...) asparagine glycans are attached at residues N46 and N56. 3 helical membrane passes run 66–86, 100–120, and 139–159; these read VQAL…LFMF, TGLC…IYAI, and FALA…YIHL.

The protein belongs to the PMP-22/EMP/MP20 family.

It is found in the membrane. Functionally, probably involved in cell proliferation and cell-cell interactions. This is Epithelial membrane protein 3 (Emp3) from Mus musculus (Mouse).